The sequence spans 631 residues: Mu-like prophage FluMu protein gp42 (631 aa).

Transmembrane regions (helical) follow at residues 56–76 and 385–405; these read LGNITIPIIGVGAAAGATMVG and GLADGVAGALGATVGVTPVYV. A disordered region spans residues 425–453; the sequence is IEDGRDKDKKTQKKNKPPRPKRGRGSVRS. Residues 434-449 are compositionally biased toward basic residues; sequence KTQKKNKPPRPKRGRG. A run of 3 helical transmembrane segments spans residues 455–475, 495–515, and 543–563; these read VAAVAASAAAVPKVAAPVTTA, SKAVPYLGTGLAVAEGVTVLM, and ALIPIPVVGAAVGSYLGGWLG.

It to phage Mu protein gp42.

It localises to the cell membrane. In Haemophilus influenzae (strain ATCC 51907 / DSM 11121 / KW20 / Rd), this protein is Mu-like prophage FluMu protein gp42.